We begin with the raw amino-acid sequence, 177 residues long: ATP-dependent protease subunit HslV (177 aa).

T7 is an active-site residue. Positions 162, 165, and 168 each coordinate Na(+).

The protein belongs to the peptidase T1B family. HslV subfamily. A double ring-shaped homohexamer of HslV is capped on each side by a ring-shaped HslU homohexamer. The assembly of the HslU/HslV complex is dependent on binding of ATP.

It is found in the cytoplasm. The enzyme catalyses ATP-dependent cleavage of peptide bonds with broad specificity.. With respect to regulation, allosterically activated by HslU binding. Its function is as follows. Protease subunit of a proteasome-like degradation complex believed to be a general protein degrading machinery. The sequence is that of ATP-dependent protease subunit HslV from Thioalkalivibrio sulfidiphilus (strain HL-EbGR7).